A 1255-amino-acid chain; its full sequence is Structural polyprotein (1255 aa).

The interval 1-33 (MFPFQPMYPMQPMPYRNPFAAPRRPWFPRTDPF) is necessary for nucleocapsid assembly and virus assembly. Residues 33 to 68 (FLAMQVQELTRSMANLTFKQRRDAPPEGPPAKKPKR) form a host transcription inhibition region. Residues 41 to 48 (LTRSMANL) carry the Supraphysiological nuclear export signal motif. The disordered stretch occupies residues 44–119 (SMANLTFKQR…KKPGKRQRMV (76 aa)). Positions 64 to 68 (KKPKR) match the Nuclear localization signal motif. Basic residues predominate over residues 80–92 (GKKKKNQGKKKAK). A binding to the viral RNA region spans residues 91–127 (AKTGPPNPKAQSGNKKKPNKKPGKRQRMVMKLESDKT). Residue threonine 93 is modified to Phosphothreonine. Over residues 104–118 (NKKKPNKKPGKRQRM) the composition is skewed to basic residues. Positions 112-126 (PGKRQRMVMKLESDK) are ribosome-binding. At serine 124 the chain carries Phosphoserine. Residues 126-275 (KTFPIMLEGK…KYTPENCEQW (150 aa)) form the Peptidase S3 domain. A Phosphothreonine modification is found at threonine 127. Histidine 152 serves as the catalytic Charge relay system. The segment at 168-173 (KKASKY) is interaction with spike glycoprotein E2. Active-site charge relay system residues include aspartate 174 and serine 226. The tract at residues 260–264 (EKGVT) is interaction with spike glycoprotein E2. A functions as an uncleaved signal peptide for the precursor of protein E3/E2 region spans residues 276–287 (SLVTTMCLLANV). Over 276 to 701 (SLVTTMCLLA…HYYHRYPMST (426 aa)) the chain is Extracellular. Intrachain disulfides connect cysteine 282–cysteine 291, cysteine 353–cysteine 457, cysteine 356–cysteine 361, cysteine 424–cysteine 438, cysteine 485–cysteine 600, cysteine 534–cysteine 560, and cysteine 536–cysteine 554. A glycan (N-linked (GlcNAc...) asparagine; by host) is linked at asparagine 286. An N-linked (GlcNAc...) asparagine; by host glycan is attached at asparagine 652. A helical membrane pass occupies residues 702 to 722 (ILGLSICAAIVTVSVAASTWL). At 723 to 757 (FCKSRVSCLTPYRLTPNARMPLCLAVLCCARTARA) the chain is on the cytoplasmic side. The tract at residues 725–729 (KSRVS) is interaction with the capsid protein. Residues cysteine 730, cysteine 750, and cysteine 751 are each lipidated (S-palmitoyl cysteine; by host). A transient transmembrane before p62-6K protein processing region spans residues 730-750 (CLTPYRLTPNARMPLCLAVLC). A disulfide bond links cysteine 730 and cysteine 751. Topologically, residues 758-769 (ETTWESLDHLWN) are extracellular. The helical transmembrane segment at 770–790 (NNQQMFWIQLLIPLAALIVVT) threads the bilayer. Residue arginine 791 is a topological domain, cytoplasmic. The helical transmembrane segment at 792-812 (LLKCVCCVVPFLVVAGAAGAG) threads the bilayer. At 813–1225 (AYEHATTMPS…SKTAWTWLTS (413 aa)) the chain is on the extracellular side. 4 disulfides stabilise this stretch: cysteine 862-cysteine 927, cysteine 875-cysteine 907, cysteine 876-cysteine 909, and cysteine 881-cysteine 891. The interval 897-914 (VYPFMWGGAYCFCDTENT) is E1 fusion peptide loop. N-linked (GlcNAc...) asparagine; by host glycans are attached at residues asparagine 947 and asparagine 1083. 4 cysteine pairs are disulfide-bonded: cysteine 1072–cysteine 1084, cysteine 1114–cysteine 1189, cysteine 1119–cysteine 1193, and cysteine 1141–cysteine 1183. Residues 1226-1246 (LLGGSAVIIIIGLVLATIVAM) traverse the membrane as a helical segment. The Cytoplasmic portion of the chain corresponds to 1247–1255 (YVLTNQKHN).

As to quaternary structure, homodimer. Homomultimer. Interacts with host karyopherin KPNA4; this interaction allows the nuclear import of the viral capsid protein. Interacts with spike glycoprotein E2. Interacts with host IRAK1; the interaction leads to inhibition of IRAK1-dependent signaling. Part of a tetrameric complex composed of host CRM1, host importin alpha/beta dimer and the viral capsid; this complex blocks the receptor-mediated transport through the nuclear pore. Interacts with host phosphatase PPP1CA; this interaction dephosphorylates the capsid protein, which increases its ability to bind to the viral genome. In terms of assembly, the precursor of protein E3/E2 and E1 form a heterodimer shortly after synthesis. Interacts with spike glycoprotein E2. The precursor of protein E3/E2 and E1 form a heterodimer shortly after synthesis. Processing of the precursor of protein E3/E2 into E2 and E3 results in a heterodimer of the spike glycoproteins E2 and E1. Spike at virion surface are constituted of three E2-E1 heterodimers. After target cell attachment and endocytosis, E1 change conformation to form homotrimers. Interacts with 6K protein. Interacts with host LDLRAD3; this interaction mediates viral entry to the host cell. As to quaternary structure, interacts with spike glycoprotein E1. Processing of the precursor of protein E3/E2 into E2 and E3 results in a heterodimer of the spike glycoproteins E2 and E1. Spike at virion surface are constituted of a trimer of E2-E1 heterodimers. Interacts with 6K protein. Interacts with host LDLRAD3; this interaction mediates viral entry to the host cell. In terms of assembly, oligomer. Interacts with spike glycoprotein E1. Interacts with spike glycoprotein E2. Post-translationally, structural polyprotein: Specific enzymatic cleavages in vivo yield mature proteins. Capsid protein is auto-cleaved during polyprotein translation, unmasking a signal peptide at the N-terminus of the precursor of E3/E2. The remaining polyprotein is then targeted to the host endoplasmic reticulum, where host signal peptidase cleaves it into pE2, 6K and E1 proteins. pE2 is further processed to mature E3 and E2 by host furin in trans-Golgi vesicle. Phosphorylated on serine and threonine residues. In terms of processing, palmitoylated via thioester bonds. These palmitoylations may induce disruption of the C-terminus transmembrane. This would result in the reorientation of E2 C-terminus from lumenal to cytoplasmic side. Post-translationally, N-glycosylated. Palmitoylated via thioester bonds.

It localises to the virion. It is found in the host cytoplasm. The protein resides in the host cell membrane. Its subcellular location is the host nucleus. The protein localises to the virion membrane. It localises to the host Golgi apparatus. It is found in the host trans-Golgi network. The protein resides in the host endoplasmic reticulum. The catalysed reaction is Autocatalytic release of the core protein from the N-terminus of the togavirus structural polyprotein by hydrolysis of a -Trp-|-Ser- bond.. In terms of biological role, forms an icosahedral capsid with a T=4 symmetry composed of 240 copies of the capsid protein surrounded by a lipid membrane through which penetrate 80 spikes composed of trimers of E1-E2 heterodimers. The capsid protein binds to the viral RNA genome at a site adjacent to a ribosome binding site for viral genome translation following genome release. Possesses a protease activity that results in its autocatalytic cleavage from the nascent structural protein. Following its self-cleavage, the capsid protein transiently associates with ribosomes, and within several minutes the protein binds to viral RNA and rapidly assembles into icosahedric core particles. The resulting nucleocapsid eventually associates with the cytoplasmic domain of the spike glycoprotein E2 at the cell membrane, leading to budding and formation of mature virions. In case of infection, new virions attach to target cells and after clathrin-mediated endocytosis their membrane fuses with the host endosomal membrane. This leads to the release of the nucleocapsid into the cytoplasm, followed by an uncoating event necessary for the genomic RNA to become accessible. The uncoating might be triggered by the interaction of capsid proteins with ribosomes. Binding of ribosomes would release the genomic RNA since the same region is genomic RNA-binding and ribosome-binding. Specifically inhibits interleukin-1 receptor-associated kinase 1/IRAK1-dependent signaling during viral entry, representing a means by which the alphaviruses may evade innate immune detection and activation prior to viral gene expression. Inhibits host transcription. Forms a tetrameric complex with XPO1/CRM1 and the nuclear import receptor importin. This complex blocks the central channel of host nuclear pores thereby inhibiting the receptor-mediated nuclear transport and thus the host mRNA and rRNA transcription. The inhibition of transcription is linked to a cytopathic effect on the host cell. Provides the signal sequence for the translocation of the precursor of protein E3/E2 to the host endoplasmic reticulum. Furin-cleaved E3 remains associated with spike glycoprotein E1 and mediates pH protection of the latter during the transport via the secretory pathway. After virion release from the host cell, the assembly protein E3 is gradually released in the extracellular space. Its function is as follows. Plays a role in viral attachment to target host cell, by binding to the cell receptor LDLRAD3. Synthesized as a p62 precursor which is processed by furin at the cell membrane just before virion budding, giving rise to E2-E1 heterodimer. The p62-E1 heterodimer is stable, whereas E2-E1 is unstable and dissociate at low pH. p62 is processed at the last step, presumably to avoid E1 fusion activation before its final export to cell surface. E2 C-terminus contains a transitory transmembrane that would be disrupted by palmitoylation, resulting in reorientation of the C-terminal tail from lumenal to cytoplasmic side. This step is critical since E2 C-terminus is involved in budding by interacting with capsid proteins. This release of E2 C-terminus in cytoplasm occurs lately in protein export, and precludes premature assembly of particles at the endoplasmic reticulum membrane. Functionally, acts as a viroporin that participates in virus glycoprotein processing and transport to the plasma membrane, cell permeabilization and budding of viral particles. Disrupts the calcium homeostasis of the cell, probably at the endoplasmic reticulum level. This leads to cytoplasmic calcium elevation. Because of its lipophilic properties, the 6K protein is postulated to influence the selection of lipids that interact with the transmembrane domains of the glycoproteins, which, in turn, affects the deformability of the bilayer required for the extreme curvature that occurs as budding proceeds. Present in low amount in virions, about 3% compared to viral glycoproteins. In terms of biological role, class II viral fusion protein. Fusion activity is inactive as long as E1 is bound to E2 in mature virion. After virus attachment to cell receptor LDLRAD3 and endocytosis, acidification of the endosome induce dissociation of E1/E2 heterodimer and concomitant trimerization of the E1 subunits. This E1 trimer is fusion active, and promotes release of viral nucleocapsid in cytoplasm after endosome and viral membrane fusion. Efficient fusion requires the presence of cholesterol and sphingolipid in the target membrane. In Venezuelan equine encephalitis virus (strain P676) (VEEV), this protein is Structural polyprotein.